Consider the following 534-residue polypeptide: Major facilitator-type transporter sor6 (534 aa).

N-linked (GlcNAc...) asparagine glycans are attached at residues Asn-29 and Asn-36. 12 helical membrane passes run 66–86 (WFLT…SSAY), 103–123 (LFIT…AVWG), 160–180 (AMVA…LIVL), 182–202 (FLAG…IADL), 209–229 (GLAM…GPIV), 241–261 (WVQG…VIFV), 318–338 (IVLI…MFLG), 354–374 (FGGL…GYAI), 395–415 (LPPA…FAWT), 424–444 (VSIV…LPIV), 456–476 (ASVL…FPLF), and 486–506 (IHWA…FPFF).

This sequence belongs to the major facilitator superfamily. Sugar transporter (TC 2.A.1.1) family.

The protein localises to the membrane. Functionally, major facilitator-type transporter; part of the gene cluster that mediates the biosynthesis of sorbicillinoids, a diverse group of yellow secondary metabolites that restrict growth of competing pathogenic fungi but not of bacteria. This is Major facilitator-type transporter sor6 from Hypocrea jecorina (strain QM6a) (Trichoderma reesei).